The sequence spans 343 residues: Ribosomal RNA small subunit methyltransferase C (343 aa).

The protein belongs to the methyltransferase superfamily. RsmC family. As to quaternary structure, monomer.

Its subcellular location is the cytoplasm. The enzyme catalyses guanosine(1207) in 16S rRNA + S-adenosyl-L-methionine = N(2)-methylguanosine(1207) in 16S rRNA + S-adenosyl-L-homocysteine + H(+). Its function is as follows. Specifically methylates the guanine in position 1207 of 16S rRNA in the 30S particle. The sequence is that of Ribosomal RNA small subunit methyltransferase C from Escherichia coli O1:K1 / APEC.